The following is a 406-amino-acid chain: Prenyltransferase phqJ (406 aa).

Polar residues predominate over residues 1 to 19 (MTVSTESNFPHGASTQKPQ). Positions 1–23 (MTVSTESNFPHGASTQKPQSAEP) are disordered. Glu99 is a brevianamide F binding site. Residues Arg113, Lys200, and Tyr202 each contribute to the dimethylallyl diphosphate site. Residue Tyr204 participates in brevianamide F binding. Residues Lys269, Tyr271, and Tyr340 each contribute to the dimethylallyl diphosphate site.

This sequence belongs to the tryptophan dimethylallyltransferase family.

It functions in the pathway alkaloid biosynthesis. Prenyltransferase; part of the gene cluster that mediates the biosynthesis of paraherquamide, a fungal indole alkaloid that belongs to a family of natural products containing a characteristic bicyclo[2.2.2]diazaoctane core. The first steps in the biosynthesis of paraherquamide is the production of the beta-methyl-proline precursor from L-isoleucine. They require oxidation of a terminally hydroxylated L-isoleucine to the corresponding aldehyde by enzymes which have still to be identified. Spontaneous cyclization and dehydration would yield the 4-methyl pyrolline-5-carboxylic acid, which is then reduced by the pyrroline-5-carboxylate reductase phqD leading to the beta-methyl-proline precursor. The next step of paraherquamide biosynthesis involves coupling of beta-methyl-proline and L-tryptophan by the bimodular NRPS phqB, to produce a monooxopiperazine intermediate. The reductase (R) domain of phqB utilizes NADPH for hydride transfer to reduce the thioester bond of the T domain-tethered linear dipeptide to a hemithioaminal intermediate, which spontaneously cleaves the C-S bond to release the aldehyde product. This compound undergoes spontaneous cyclization and dehydration to give a dienamine which is reverse prenylated at C-2 by the reverse prenyltransferase phqJ. The other prenyltransferase present in the cluster, phqI may be a redundant gene in the pathway. During biosynthetic assembly, the key step to produce the polycyclic core is catalyzed by the bifunctional reductase and intramolecular [4+2] Diels-Alderase, phqE, resulting in formation of the [2.2.2] diazaoctane intermediate preparaherquamide. Following formation of preparaherquamide, an indole 2,3-epoxidation-initiated pinacol-like rearrangement is catalyzed by the phqK FAD-dependent monooxygenase. The prenyltransferase phqA, the cytochrome P450 monooxygenase phqL, and the FAD-linked oxidoreductase phqH (or the cytochrome P450 monooxygenase phqM), are proposed to be involved in the formation of the pyran ring. The FAD-dependent monooxygenase phqK is likely responsible for generation of the spiro-oxindole, and the N-methylation is likely mediated by the phqN methyltransferase leading to the isolable natural product paraherquamide F. However, the order of these biosynthetic steps has still to be determined. In late-stage paraherquamide biosynthesis, the third P450 monooxygenase, phqO, is probably responsible for the C-14 hydroxylation, transforming paraherquamide F to paraherquamide G, and paraherquamide E to the final product paraherquamide A. The expansion from the 6-membered ring pyran (in paraherquamides F and G) to the 7-membered dioxepin ring (in paraherquamides A and E) represents a poorly understood but intriguing process that probably involves the 2-oxoglutarate-dependent dioxygenase phqC. Finally, the remaining members of the paraherquamide cluster, including phqI as well as phqM (or phqH), do not have a clearly prescribed role and appear to be redundant. The polypeptide is Prenyltransferase phqJ (Penicillium fellutanum).